Here is a 359-residue protein sequence, read N- to C-terminus: 3-dehydroquinate synthase (359 aa).

NAD(+)-binding positions include 106–110 (GVVGD), 130–131 (TS), Lys-143, and Lys-152. Residues Glu-185, His-246, and His-262 each coordinate Zn(2+).

This sequence belongs to the sugar phosphate cyclases superfamily. Dehydroquinate synthase family. NAD(+) serves as cofactor. The cofactor is Co(2+). It depends on Zn(2+) as a cofactor.

It is found in the cytoplasm. It carries out the reaction 7-phospho-2-dehydro-3-deoxy-D-arabino-heptonate = 3-dehydroquinate + phosphate. It participates in metabolic intermediate biosynthesis; chorismate biosynthesis; chorismate from D-erythrose 4-phosphate and phosphoenolpyruvate: step 2/7. In terms of biological role, catalyzes the conversion of 3-deoxy-D-arabino-heptulosonate 7-phosphate (DAHP) to dehydroquinate (DHQ). This is 3-dehydroquinate synthase from Lactiplantibacillus plantarum (strain ATCC BAA-793 / NCIMB 8826 / WCFS1) (Lactobacillus plantarum).